A 271-amino-acid polypeptide reads, in one-letter code: GATA transcription factor 19 (271 aa).

Positions 1–23 (MAAEPPADGRDPPADDGAAGDGA) are disordered. Residues 33–68 (LSAASEQLTLVYQGEVYVFDPVPPQKVQAVLLVLGG) form the Tify domain. The 43-residue stretch at 95–137 (RIASLMRFREKRKERCFDKKIRYSVRKEVAQKMKRRKGQFAGR) folds into the CCT domain. The GATA-type zinc finger occupies 166-193 (CQNCGISSRLTPAMRRGPAGPRSLCNAC). The tract at residues 238-271 (NQTTMKTDTEMVPEQEQKADVLPPTKEEDSMATS) is disordered. The segment covering 252 to 271 (QEQKADVLPPTKEEDSMATS) has biased composition (basic and acidic residues).

It belongs to the type IV zinc-finger family. Class C subfamily.

The protein localises to the nucleus. Functionally, transcriptional activator that specifically binds 5'-GATA-3' or 5'-GAT-3' motifs within gene promoters. This Oryza sativa subsp. indica (Rice) protein is GATA transcription factor 19.